A 177-amino-acid chain; its full sequence is Bifunctional protein PyrR (177 aa).

The short motif at 101–113 (IILIDDVLYTGRT) is the PRPP-binding element.

Belongs to the purine/pyrimidine phosphoribosyltransferase family. PyrR subfamily.

It catalyses the reaction UMP + diphosphate = 5-phospho-alpha-D-ribose 1-diphosphate + uracil. Its function is as follows. Regulates the transcription of the pyrimidine nucleotide (pyr) operon in response to exogenous pyrimidines. In terms of biological role, also displays a weak uracil phosphoribosyltransferase activity which is not physiologically significant. The sequence is that of Bifunctional protein PyrR from Endomicrobium trichonymphae.